The primary structure comprises 264 residues: 3'-5' ssDNA/RNA exonuclease TatD (264 aa).

3 residues coordinate a divalent metal cation: Glu92, His128, and His153.

Belongs to the metallo-dependent hydrolases superfamily. TatD-type hydrolase family. TatD subfamily. Monomer. The cofactor is Mg(2+).

It is found in the cytoplasm. Functionally, 3'-5' exonuclease that prefers single-stranded DNA and RNA. May play a role in the H(2)O(2)-induced DNA damage repair. In Musicola paradisiaca (strain Ech703) (Dickeya paradisiaca), this protein is 3'-5' ssDNA/RNA exonuclease TatD.